Consider the following 350-residue polypeptide: Patr class I histocompatibility antigen, alpha chain E (350 aa).

The signal sequence occupies residues 1–21 (MVDGTLLLLLSEALALTQTWA). The segment at 22–111 (GSHSLKYFHT…LRGYYNQSEA (90 aa)) is alpha-1. At 22-305 (GSHSLKYFHT…KPASQPTIPI (284 aa)) the chain is on the extracellular side. N-linked (GlcNAc...) asparagine glycosylation occurs at Asn-107. The tract at residues 112–203 (GSHTLQWMHG…EKGKETLLHL (92 aa)) is alpha-2. Disulfide bonds link Cys-122–Cys-185 and Cys-224–Cys-280. The interval 204-295 (EPPKTHVTHH…GLPEPLTLRW (92 aa)) is alpha-3. One can recognise an Ig-like C1-type domain in the interval 206–294 (PKTHVTHHPI…EGLPEPLTLR (89 aa)). The tract at residues 296–305 (KPASQPTIPI) is connecting peptide. Residues 306–329 (VGIIAGLVLLGSVVSGAVVAAVMW) traverse the membrane as a helical segment. Residues 330-350 (RKKSSGGKGRSYSKAEWSDSA) lie on the Cytoplasmic side of the membrane.

The protein belongs to the MHC class I family. In terms of assembly, heterodimer of an alpha chain and a beta chain (beta-2-microglobulin).

The protein resides in the membrane. In terms of biological role, preferably binds to a peptide derived from the signal sequence of most HLA-A, -B, -C and -G molecules. This is Patr class I histocompatibility antigen, alpha chain E (Patr-E) from Pan troglodytes (Chimpanzee).